Consider the following 318-residue polypeptide: Probable plastid-lipid-associated protein 1, chloroplastic (318 aa).

A chloroplast-targeting transit peptide spans 1–55 (MATVPLFTQFPCKTLNPSSSNTKHQSKSPILLPINSINRRSEIGVSVHRPDFKIR). Thr-57 is subject to Phosphothreonine.

The protein belongs to the PAP/fibrillin family. As to quaternary structure, interacts (via N-terminus) with ABI2. As to expression, expressed in flower buds. Detected in tapetal cells, endothecium and connective in anthers and in subepidermal cells in filaments.

It localises to the plastid. It is found in the chloroplast. The protein resides in the plastoglobule. The protein localises to the chloroplast thylakoid. In terms of biological role, probably involved in light/cold stress-related jasmonate (JA) biosynthesis. Contributes to the protection of photosystem II (PSII) against light stress. The sequence is that of Probable plastid-lipid-associated protein 1, chloroplastic (PAP1) from Arabidopsis thaliana (Mouse-ear cress).